Here is a 699-residue protein sequence, read N- to C-terminus: uncharacterized protein (699 aa).

Disordered stretches follow at residues 175–208 (PTLG…ASLS), 289–364 (PTAK…EEPD), and 539–603 (RAKE…KEYL). A compositionally biased stretch (basic and acidic residues) spans 183-194 (PSKHGDHSDSKT). The span at 195-208 (YESPISNSQAASLS) shows a compositional bias: polar residues. Positions 308–322 (SKHKKRPKRLSKFKQ) are enriched in basic residues. The segment covering 323 to 338 (AKLETKKSGNKDHATS) has biased composition (basic and acidic residues). 2 stretches are compositionally biased toward polar residues: residues 339–360 (SEKL…SSSI) and 548–573 (HSNA…NTKL). A compositionally biased stretch (basic and acidic residues) spans 574 to 603 (NPKEEDKSTVESELKAPPKEKSSETSKEYL).

It is found in the cytoplasm. This is an uncharacterized protein from Schizosaccharomyces pombe (strain 972 / ATCC 24843) (Fission yeast).